The chain runs to 206 residues: Peptidyl-tRNA hydrolase (206 aa).

Tyrosine 14 lines the tRNA pocket. Histidine 19 acts as the Proton acceptor in catalysis. TRNA is bound by residues tyrosine 64 and asparagine 66. The tract at residues phenylalanine 182–lysine 206 is disordered.

This sequence belongs to the PTH family. Monomer.

It localises to the cytoplasm. It catalyses the reaction an N-acyl-L-alpha-aminoacyl-tRNA + H2O = an N-acyl-L-amino acid + a tRNA + H(+). In terms of biological role, hydrolyzes ribosome-free peptidyl-tRNAs (with 1 or more amino acids incorporated), which drop off the ribosome during protein synthesis, or as a result of ribosome stalling. Catalyzes the release of premature peptidyl moieties from peptidyl-tRNA molecules trapped in stalled 50S ribosomal subunits, and thus maintains levels of free tRNAs and 50S ribosomes. This chain is Peptidyl-tRNA hydrolase, found in Desulforamulus reducens (strain ATCC BAA-1160 / DSM 100696 / MI-1) (Desulfotomaculum reducens).